An 85-amino-acid chain; its full sequence is UPF0386 protein MXAN_1729 (85 aa).

The protein belongs to the UPF0386 family.

The chain is UPF0386 protein MXAN_1729 from Myxococcus xanthus (strain DK1622).